We begin with the raw amino-acid sequence, 176 residues long: Disulfide bond formation protein B (176 aa).

Residues 1-13 are Cytoplasmic-facing; it reads MQFLNTFSKSRIS. The chain crosses the membrane as a helical span at residues 14 to 30; sequence WLLLLLCIVFFEGSALF. Topologically, residues 31–48 are periplasmic; it reads FQHGMKLGPCVMCIYERV. Residues Cys40 and Cys43 are joined by a disulfide bond. A helical membrane pass occupies residues 49–64; sequence AMMGIAFAALLGAIAP. Topologically, residues 65-71 are cytoplasmic; sequence QYAIIRW. A helical transmembrane segment spans residues 72-89; it reads AGLIAWGYSAVRGLQLSI. At 90–144 the chain is on the periplasmic side; sequence EHVGYQFNPSPFATCDLFVQFPNWAPLNKWVPWMFEAYGNCAEVVWTFLGQSMPQ. An intrachain disulfide couples Cys104 to Cys130. A helical transmembrane segment spans residues 145 to 163; that stretch reads WLVIIFAGNLVALALIVIA. At 164–176 the chain is on the cytoplasmic side; sequence QFFSKKTNTILDM.

This sequence belongs to the DsbB family.

Its subcellular location is the cell inner membrane. Its function is as follows. Required for disulfide bond formation in some periplasmic proteins. Acts by oxidizing the DsbA protein. This Photobacterium profundum (strain SS9) protein is Disulfide bond formation protein B.